The following is a 625-amino-acid chain: E3 ubiquitin-protein ligase CHFR (625 aa).

In terms of domain architecture, FHA spans 34-85 (WTIGRKKACDLSFPGNKLVSGEHCKITVNEESGEVSLEDTSTNGTVINKLKV). Disordered stretches follow at residues 123-171 (QDSL…PTTS) and 205-229 (IPKS…RTED). A compositionally biased stretch (polar residues) spans 140 to 149 (TQTLSSQDDQ). Over residues 158–171 (STSTSSLFSTPTTS) the composition is skewed to low complexity. Residues 206-216 (PKSNLSTQEQG) are compositionally biased toward polar residues. The RING-type zinc-finger motif lies at 266 to 305 (CIICQELLHDCVSLQPCMHTFCAACYSGWMERSSLCPTCR). Disordered regions lie at residues 350–386 (DMLQ…ISQP) and 401–427 (MQPP…TSTN). The span at 362-380 (DEEGSSEDLLELSDVDSES) shows a compositional bias: acidic residues. Residues 411–427 (DTETSRTQGDAPSTSTN) show a composition bias toward polar residues. A PBZ-type zinc finger spans residues 594-616 (PNCYWGRNCRTQVKAHHAMKFNH).

It belongs to the CHFR family.

It is found in the nucleus. It localises to the PML body. It carries out the reaction S-ubiquitinyl-[E2 ubiquitin-conjugating enzyme]-L-cysteine + [acceptor protein]-L-lysine = [E2 ubiquitin-conjugating enzyme]-L-cysteine + N(6)-ubiquitinyl-[acceptor protein]-L-lysine.. Its pathway is protein modification; protein ubiquitination. In terms of biological role, E3 ubiquitin-protein ligase that functions in the antephase checkpoint by actively delaying passage into mitosis in response to microtubule poisons. Acts in early prophase before chromosome condensation, when the centrosome move apart from each other along the periphery of the nucleus. Probably involved in signaling the presence of mitotic stress caused by microtubule poisons by mediating the 'Lys-48'-linked ubiquitination of target proteins, leading to their degradation by the proteasome. May also promote the formation of 'Lys-63'-linked polyubiquitin chains and functions with the specific ubiquitin-conjugating ubc13-mms2 (ube2n-ube2v2) heterodimer. Substrates that are polyubiquitinated at 'Lys-63' are usually not targeted for degradation, but are rather involved in signaling cellular stress. The polypeptide is E3 ubiquitin-protein ligase CHFR (chfr) (Xenopus laevis (African clawed frog)).